Here is a 494-residue protein sequence, read N- to C-terminus: Nicotianamine aminotransferase 1 (494 aa).

Low complexity-rich tracts occupy residues Ser-24 to Ser-38 and Ser-48 to Ser-62. A disordered region spans residues Ser-24 to Arg-76. At Lys-322 the chain carries N6-(pyridoxal phosphate)lysine.

Belongs to the class-I pyridoxal-phosphate-dependent aminotransferase family. Pyridoxal 5'-phosphate is required as a cofactor. In terms of tissue distribution, expressed in companion and pericycle cells adjacent to the protoxylem of roots. Expressed in companion cells of shoots.

It carries out the reaction nicotianamine + 2-oxoglutarate = 3''-deamino-3''-oxonicotianamine + L-glutamate. In terms of biological role, involved in biosynthesis of mugineic acid family phytosiderophores, which are ferric iron chelators produced in graminaceous plants in response to iron deficiency. This Oryza sativa subsp. japonica (Rice) protein is Nicotianamine aminotransferase 1.